A 309-amino-acid polypeptide reads, in one-letter code: NmrA-like family domain-containing protein 1 (309 aa).

NADP(+) contacts are provided by residues 11 to 16 (GATGAQ), 37 to 41 (RNPEQ), 58 to 59 (DQ), 79 to 81 (TNY), Lys-102, Lys-143, and 165 to 168 (YFEN). The segment at 163–199 (PCYFENLLSYFLPQKAADGKSFLLDLPMGDVPMDGMS) is interaction with ASS1.

The protein belongs to the NmrA-type oxidoreductase family. Homodimer. Interacts with ASS1. Interaction is enhanced by low NADPH/NADP(+) ratios, which results in inhibition of ASS1 activity.

The protein resides in the cytoplasm. It is found in the perinuclear region. It localises to the nucleus. Redox sensor protein. Undergoes restructuring and subcellular redistribution in response to changes in intracellular NADPH/NADP(+) levels. At low NADPH concentrations the protein is found mainly as a monomer, and binds argininosuccinate synthase (ASS1), the enzyme involved in nitric oxide synthesis. Association with ASS1 impairs its activity and reduces the production of nitric oxide, which subsecuently prevents apoptosis. Under normal NADPH concentrations, the protein is found as a dimer and hides the binding site for ASS1. The homodimer binds one molecule of NADPH. Has higher affinity for NADPH than for NADP(+). Binding to NADPH is necessary to form a stable dimer. The chain is NmrA-like family domain-containing protein 1 (Nmral1) from Mus musculus (Mouse).